Here is a 312-residue protein sequence, read N- to C-terminus: Regulation of nuclear pre-mRNA domain-containing protein 1A (312 aa).

Ser-2 carries the post-translational modification N-acetylserine. The CID domain occupies 2–133; the sequence is SAFSEAALEK…QLKHALYGDK (132 aa). Residues Ser-153, Ser-156, and Ser-285 each carry the phosphoserine modification. Residues 244-286 are a coiled coil; that stretch reads LADFLRCQKEALAEKEHKLEEYKRKLARVSLVRKELRARIQSL.

This sequence belongs to the UPF0400 (RTT103) family. May form a heterodimer with RPRD1B. Associates with the RNA polymerase II subunit POLR2A (via CTD phosphorylated at 'Ser-2' and 'Ser-7' of the heptad repeats).

It is found in the nucleus. Functionally, interacts with phosphorylated C-terminal heptapeptide repeat domain (CTD) of the largest RNA polymerase II subunit POLR2A, and participates in dephosphorylation of the CTD by RPAP2. May act as a negative regulator of cyclin-D1 (CCND1) and cyclin-E (CCNE1) in the cell cycle. In Mus musculus (Mouse), this protein is Regulation of nuclear pre-mRNA domain-containing protein 1A (Rprd1a).